The primary structure comprises 559 residues: Dihydroxy-acid dehydratase (559 aa).

C49 contacts [2Fe-2S] cluster. A Mg(2+)-binding site is contributed by D81. Position 122 (C122) interacts with [2Fe-2S] cluster. D123 and K124 together coordinate Mg(2+). K124 is subject to N6-carboxylysine. A [2Fe-2S] cluster-binding site is contributed by C194. E446 lines the Mg(2+) pocket. S472 (proton acceptor) is an active-site residue.

The protein belongs to the IlvD/Edd family. Homodimer. [2Fe-2S] cluster serves as cofactor. Requires Mg(2+) as cofactor.

The enzyme catalyses (2R)-2,3-dihydroxy-3-methylbutanoate = 3-methyl-2-oxobutanoate + H2O. The catalysed reaction is (2R,3R)-2,3-dihydroxy-3-methylpentanoate = (S)-3-methyl-2-oxopentanoate + H2O. Its pathway is amino-acid biosynthesis; L-isoleucine biosynthesis; L-isoleucine from 2-oxobutanoate: step 3/4. The protein operates within amino-acid biosynthesis; L-valine biosynthesis; L-valine from pyruvate: step 3/4. Its function is as follows. Functions in the biosynthesis of branched-chain amino acids. Catalyzes the dehydration of (2R,3R)-2,3-dihydroxy-3-methylpentanoate (2,3-dihydroxy-3-methylvalerate) into 2-oxo-3-methylpentanoate (2-oxo-3-methylvalerate) and of (2R)-2,3-dihydroxy-3-methylbutanoate (2,3-dihydroxyisovalerate) into 2-oxo-3-methylbutanoate (2-oxoisovalerate), the penultimate precursor to L-isoleucine and L-valine, respectively. In Prochlorococcus marinus subsp. pastoris (strain CCMP1986 / NIES-2087 / MED4), this protein is Dihydroxy-acid dehydratase.